The sequence spans 396 residues: Lysophospholipid transporter LplT (396 aa).

Residues 1–17 (MSESVHTNTSLWSKGMK) are Periplasmic-facing. The chain crosses the membrane as a helical span at residues 18–38 (AVIVAQFLSAFGDNALLFATL). Residues 39-52 (ALLKAQFYPEWSQP) lie on the Cytoplasmic side of the membrane. A helical membrane pass occupies residues 53–73 (ILQMVFVGAYILLAPFVGQVA). Topologically, residues 74-90 (DSFAKGRVMMFANGLKL) are periplasmic. The chain crosses the membrane as a helical span at residues 91–111 (LGAASICFGINPFLGYTLVGV). At 112–144 (GAAAYSPAKYGILGELTTGSKLVKANGLMEASA) the chain is on the cytoplasmic side. A helical transmembrane segment spans residues 145 to 165 (IAAILLGSVAGGVLADWHVLV). Alanine 166 is a topological domain (periplasmic). Residues 167–187 (LAACALAYGGAVVANIYIPKL) form a helical membrane-spanning segment. The Cytoplasmic portion of the chain corresponds to 188 to 225 (AARPGQSWNLINMTRSFLNACTSLWCNGETRFSLVGAS). The helical transmembrane segment at 226 to 246 (LFWGAGVTLRFLLVLWVPVAL) threads the bilayer. The Periplasmic segment spans residues 247 to 255 (GITDNATPT). Residues 256–276 (YLNAMVAIGIVVGAGAAAKLV) traverse the membrane as a helical segment. The Cytoplasmic segment spans residues 277-279 (TLE). Residues 280–300 (TVSRCMPAGILIGVVVLIFSL) form a helical membrane-spanning segment. Over 301 to 303 (QHE) the chain is Periplasmic. The helical transmembrane segment at 304–324 (LLPAYALLMLIGVLGGFFVVP) threads the bilayer. At 325 to 342 (LNALLQERGKKSVGAGNA) the chain is on the cytoplasmic side. Residues 343–363 (IAVQNLGENSAMLLMLGIYSL) traverse the membrane as a helical segment. Residues 364–365 (AV) lie on the Periplasmic side of the membrane. Residues 366 to 386 (MVGIPVVPIGIGFGALFALAI) form a helical membrane-spanning segment. The Cytoplasmic portion of the chain corresponds to 387 to 396 (TALWIWQRRH).

The protein belongs to the major facilitator superfamily. LplT (TC 2.A.1.42) family.

Its subcellular location is the cell inner membrane. Catalyzes the facilitated diffusion of 2-acyl-glycero-3-phosphoethanolamine (2-acyl-GPE) into the cell. In Shigella flexneri serotype 5b (strain 8401), this protein is Lysophospholipid transporter LplT.